An 851-amino-acid polypeptide reads, in one-letter code: Phosphatidylinositol 4-kinase pik1 (851 aa).

The PIK helical domain occupies 1 to 123; it reads MPSSNSGNEL…KICKRLYNRI (123 aa). Residues S202, S219, S222, and S235 each carry the phosphoserine modification. Y236 bears the Phosphotyrosine mark. The interval 384 to 404 is disordered; that stretch reads LQDSTDNDISESESEGGDLSM. Acidic residues predominate over residues 388-399; that stretch reads TDNDISESESEG. The 279-residue stretch at 558–836 folds into the PI3K/PI4K catalytic domain; sequence YAKKERIRKS…LIQKANCSVW (279 aa). Residues 564 to 570 form a G-loop region; it reads IRKSSPY. The segment at 706–714 is catalytic loop; the sequence is QLKDRHNGN. The tract at residues 725–749 is activation loop; sequence HIDFGFLLTNTPGNVGFESAPFKLT.

It belongs to the PI3/PI4-kinase family. Interacts with cdc4 and cam2.

It is found in the golgi apparatus. Its subcellular location is the nucleus. It carries out the reaction a 1,2-diacyl-sn-glycero-3-phospho-(1D-myo-inositol) + ATP = a 1,2-diacyl-sn-glycero-3-phospho-(1D-myo-inositol 4-phosphate) + ADP + H(+). In terms of biological role, acts on phosphatidylinositol (PI) in the first committed step in the production of the second messenger inositol 1,4,5,-trisphosphate. PIK1 is part of a nuclear phosphoinositide cycle and could control cytokinesis through the actin cytoskeleton. The protein is Phosphatidylinositol 4-kinase pik1 (pik1) of Schizosaccharomyces pombe (strain 972 / ATCC 24843) (Fission yeast).